A 161-amino-acid chain; its full sequence is Probable ubiquitin-conjugating enzyme E2 16 (161 aa).

One can recognise a UBC core domain in the interval 15–161 (IATNRLQKEL…TRWWFHDDKV (147 aa)). The active-site Glycyl thioester intermediate is C99.

It belongs to the ubiquitin-conjugating enzyme family.

The catalysed reaction is S-ubiquitinyl-[E1 ubiquitin-activating enzyme]-L-cysteine + [E2 ubiquitin-conjugating enzyme]-L-cysteine = [E1 ubiquitin-activating enzyme]-L-cysteine + S-ubiquitinyl-[E2 ubiquitin-conjugating enzyme]-L-cysteine.. Its pathway is protein modification; protein ubiquitination. Its function is as follows. Accepts the ubiquitin from the E1 complex and catalyzes its covalent attachment to other proteins. The chain is Probable ubiquitin-conjugating enzyme E2 16 (UBC16) from Arabidopsis thaliana (Mouse-ear cress).